Reading from the N-terminus, the 390-residue chain is Succinate--CoA ligase [ADP-forming] subunit beta (390 aa).

Residues 9-244 (KEILKRYGVN…ETQTDTSENE (236 aa)) form the ATP-grasp domain. Residues lysine 46, 53 to 55 (GRG), glutamate 99, leucine 102, and glutamate 107 contribute to the ATP site. The Mg(2+) site is built by asparagine 199 and aspartate 213. Residues asparagine 264 and 321-323 (GIV) contribute to the substrate site.

It belongs to the succinate/malate CoA ligase beta subunit family. In terms of assembly, heterotetramer of two alpha and two beta subunits. Mg(2+) serves as cofactor.

The enzyme catalyses succinate + ATP + CoA = succinyl-CoA + ADP + phosphate. The catalysed reaction is GTP + succinate + CoA = succinyl-CoA + GDP + phosphate. It participates in carbohydrate metabolism; tricarboxylic acid cycle; succinate from succinyl-CoA (ligase route): step 1/1. Functionally, succinyl-CoA synthetase functions in the citric acid cycle (TCA), coupling the hydrolysis of succinyl-CoA to the synthesis of either ATP or GTP and thus represents the only step of substrate-level phosphorylation in the TCA. The beta subunit provides nucleotide specificity of the enzyme and binds the substrate succinate, while the binding sites for coenzyme A and phosphate are found in the alpha subunit. The protein is Succinate--CoA ligase [ADP-forming] subunit beta of Campylobacter curvus (strain 525.92).